A 955-amino-acid polypeptide reads, in one-letter code: UvrABC system protein A (955 aa).

Residue 35–42 (GLSGSGKS) coordinates ATP. ABC transporter domains lie at 322-601 (WGST…EESI) and 621-951 (GHDN…RYLK). 654 to 661 (GVSGSGKS) is an ATP binding site. A C4-type zinc finger spans residues 754-780 (CEACQGDGLIKIEMHFLPDVYVKCDIC).

It belongs to the ABC transporter superfamily. UvrA family. Forms a heterotetramer with UvrB during the search for lesions.

The protein localises to the cytoplasm. Functionally, the UvrABC repair system catalyzes the recognition and processing of DNA lesions. UvrA is an ATPase and a DNA-binding protein. A damage recognition complex composed of 2 UvrA and 2 UvrB subunits scans DNA for abnormalities. When the presence of a lesion has been verified by UvrB, the UvrA molecules dissociate. This is UvrABC system protein A from Rickettsia conorii (strain ATCC VR-613 / Malish 7).